Consider the following 287-residue polypeptide: ATP synthase gamma chain (287 aa).

Belongs to the ATPase gamma chain family. In terms of assembly, F-type ATPases have 2 components, CF(1) - the catalytic core - and CF(0) - the membrane proton channel. CF(1) has five subunits: alpha(3), beta(3), gamma(1), delta(1), epsilon(1). CF(0) has three main subunits: a, b and c.

It is found in the cell inner membrane. Produces ATP from ADP in the presence of a proton gradient across the membrane. The gamma chain is believed to be important in regulating ATPase activity and the flow of protons through the CF(0) complex. The sequence is that of ATP synthase gamma chain from Serratia proteamaculans (strain 568).